We begin with the raw amino-acid sequence, 405 residues long: MKYTEIMVRYGELSTKGKNRKDFIARLGGNIRKSLKDFEDVEIHPNRDRTHVTLNGTDSDAVINRLKKVFGIQNFSPMLKVEKTMEAVQAGALEMMKEQLKPGMTFKINTRRSDKEFAINTDTMNRELGGFILDNFPDNDVKMKNPDITLRVEIRSNGIFLTSEVINGAGGLPVGTAGKGMMMLSGGIDSPVAGYLGMKRGVEMEMVHFFSPPYTSEQALAKAKELSGKLAAYSGSVQFIQVPFTEIQETIKEKCPEGYLMTIQRRMMLRLVVALAKQRGGLAIFNGESLGQVASQTMESMLAINDVTTMPIIRPVVSMDKNEIIDIAKDIDTYDLSIMPFEDCCTIFAPPSPKTHPDLEKTRYFEKRIDVEGLLERSLAGVKITNIRAEENFMNQNEEVFAELL.

Residues 60–165 (DAVINRLKKV…SNGIFLTSEV (106 aa)) form the THUMP domain. ATP-binding positions include 183–184 (ML), 208–209 (HF), Arg265, Gly287, and Gln296.

The protein belongs to the ThiI family.

It is found in the cytoplasm. It catalyses the reaction [ThiI sulfur-carrier protein]-S-sulfanyl-L-cysteine + a uridine in tRNA + 2 reduced [2Fe-2S]-[ferredoxin] + ATP + H(+) = [ThiI sulfur-carrier protein]-L-cysteine + a 4-thiouridine in tRNA + 2 oxidized [2Fe-2S]-[ferredoxin] + AMP + diphosphate. It carries out the reaction [ThiS sulfur-carrier protein]-C-terminal Gly-Gly-AMP + S-sulfanyl-L-cysteinyl-[cysteine desulfurase] + AH2 = [ThiS sulfur-carrier protein]-C-terminal-Gly-aminoethanethioate + L-cysteinyl-[cysteine desulfurase] + A + AMP + 2 H(+). It participates in cofactor biosynthesis; thiamine diphosphate biosynthesis. In terms of biological role, catalyzes the ATP-dependent transfer of a sulfur to tRNA to produce 4-thiouridine in position 8 of tRNAs, which functions as a near-UV photosensor. Also catalyzes the transfer of sulfur to the sulfur carrier protein ThiS, forming ThiS-thiocarboxylate. This is a step in the synthesis of thiazole, in the thiamine biosynthesis pathway. The sulfur is donated as persulfide by IscS. The protein is Probable tRNA sulfurtransferase of Pediococcus pentosaceus (strain ATCC 25745 / CCUG 21536 / LMG 10740 / 183-1w).